The following is a 279-amino-acid chain: 30 kDa ribonucleoprotein, chloroplastic (279 aa).

One can recognise an RRM 1 domain in the interval 87–165 (LKIFVGNLLF…RALRVNSGPP (79 aa)). Positions 156–187 (RALRVNSGPPPEKRENSSFRENSSFRGGSRGG) are disordered. The segment at 166-193 (PEKRENSSFRENSSFRGGSRGGGSFDSS) is linker (Gly-rich). The region spanning 194–272 (NRVYVGNLAW…RAIRVSPAEA (79 aa)) is the RRM 2 domain.

Expressed at high levels in the leaves and seedlings, and lower levels are seen in the stems and roots.

It localises to the plastid. The protein resides in the chloroplast. Its function is as follows. Could be involved in splicing and/or processing of chloroplast RNA's. The sequence is that of 30 kDa ribonucleoprotein, chloroplastic from Nicotiana plumbaginifolia (Leadwort-leaved tobacco).